A 310-amino-acid chain; its full sequence is Methionyl-tRNA formyltransferase (310 aa).

Residue 109–112 (SLLP) participates in (6S)-5,6,7,8-tetrahydrofolate binding.

This sequence belongs to the Fmt family.

The catalysed reaction is L-methionyl-tRNA(fMet) + (6R)-10-formyltetrahydrofolate = N-formyl-L-methionyl-tRNA(fMet) + (6S)-5,6,7,8-tetrahydrofolate + H(+). Functionally, attaches a formyl group to the free amino group of methionyl-tRNA(fMet). The formyl group appears to play a dual role in the initiator identity of N-formylmethionyl-tRNA by promoting its recognition by IF2 and preventing the misappropriation of this tRNA by the elongation apparatus. This Alkaliphilus oremlandii (strain OhILAs) (Clostridium oremlandii (strain OhILAs)) protein is Methionyl-tRNA formyltransferase.